The sequence spans 149 residues: Large ribosomal subunit protein bL9 (149 aa).

It belongs to the bacterial ribosomal protein bL9 family.

Its function is as follows. Binds to the 23S rRNA. The polypeptide is Large ribosomal subunit protein bL9 (Geobacillus kaustophilus (strain HTA426)).